A 244-amino-acid chain; its full sequence is 15,16-dihydrobiliverdin:ferredoxin oxidoreductase (244 aa).

Belongs to the HY2 family.

It carries out the reaction 15,16-dihydrobiliverdin + oxidized 2[4Fe-4S]-[ferredoxin] = biliverdin IXalpha + reduced 2[4Fe-4S]-[ferredoxin] + 2 H(+). Catalyzes the two-electron reduction of biliverdin IX-alpha at the C15 methine bridge. The chain is 15,16-dihydrobiliverdin:ferredoxin oxidoreductase (pebA) from Gloeobacter violaceus (strain ATCC 29082 / PCC 7421).